A 389-amino-acid chain; its full sequence is Tryptophan synthase beta chain (389 aa).

At Lys-84 the chain carries N6-(pyridoxal phosphate)lysine.

Belongs to the TrpB family. As to quaternary structure, tetramer of two alpha and two beta chains. Pyridoxal 5'-phosphate is required as a cofactor.

It catalyses the reaction (1S,2R)-1-C-(indol-3-yl)glycerol 3-phosphate + L-serine = D-glyceraldehyde 3-phosphate + L-tryptophan + H2O. Its pathway is amino-acid biosynthesis; L-tryptophan biosynthesis; L-tryptophan from chorismate: step 5/5. Its function is as follows. The beta subunit is responsible for the synthesis of L-tryptophan from indole and L-serine. This chain is Tryptophan synthase beta chain, found in Clostridium novyi (strain NT).